The sequence spans 1118 residues: Cytospin-A (1118 aa).

Disordered stretches follow at residues 1-50 (MKKA…AALS), 75-175 (KKSN…DNQI), 294-324 (SLSP…GSVE), and 359-391 (SSDD…NASE). 3 stretches are compositionally biased toward low complexity: residues 34-48 (APTG…AAAA), 80-90 (SSAAPSAPAPA), and 99-113 (KSST…RSTS). The segment covering 120-131 (SSTRERLRERTR) has biased composition (basic and acidic residues). Residues 133-145 (NQSKKLPSVSQGA) show a composition bias toward polar residues. Basic and acidic residues predominate over residues 158 to 171 (TATEGDIRMSKSKS). Residues 168–281 (KSKSDNQISD…LNALGFSLEQ (114 aa)) are a coiled coil. Polar residues predominate over residues 294–304 (SLSPEITPGNQ). Residues 359 to 373 (SSDDALDAPSSSESE) show a composition bias toward low complexity. Ser385, Ser386, and Ser390 each carry phosphoserine. 2 coiled-coil regions span residues 395–450 (ACLT…MESL) and 488–808 (RYME…RGRV). Phosphoserine occurs at positions 869, 882, and 888. Residues 916–999 (EHLLRTSSTS…STRSRIREER (84 aa)) are disordered. The segment covering 947–957 (RSSEEMKRDIS) has biased composition (basic and acidic residues). Over residues 972–992 (TTSPQLSLSSSPTASVTPSTR) the composition is skewed to low complexity. One can recognise a Calponin-homology (CH) domain in the interval 1012-1117 (GSKRNALLKW…YVTAIYKYFE (106 aa)).

Belongs to the cytospin-A family. May interact with both microtubules and actin cytoskeleton.

Its subcellular location is the cytoplasm. It localises to the cytoskeleton. The protein resides in the spindle. It is found in the cell junction. The protein localises to the gap junction. Its function is as follows. Involved in cytokinesis and spindle organization. May play a role in actin cytoskeleton organization and microtubule stabilization and hence required for proper cell adhesion and migration. This is Cytospin-A (Specc1l) from Rattus norvegicus (Rat).